A 418-amino-acid chain; its full sequence is Dihydrolipoyllysine-residue acetyltransferase component of pyruvate dehydrogenase complex (418 aa).

The Lipoyl-binding domain occupies 2–78 (PIKLLMPALS…PVNSLIAVLI (77 aa)). Position 43 is an N6-lipoyllysine (Lys-43). Residues 133–170 (FASPLAKRLAKIQNVRIEEIKGSGPHGRIIKQDVLSHK) enclose the Peripheral subunit-binding (PSBD) domain. Residue His-388 is part of the active site.

The protein belongs to the 2-oxoacid dehydrogenase family. Forms a 24-polypeptide structural core with octahedral symmetry. The cofactor is (R)-lipoate.

The catalysed reaction is N(6)-[(R)-dihydrolipoyl]-L-lysyl-[protein] + acetyl-CoA = N(6)-[(R)-S(8)-acetyldihydrolipoyl]-L-lysyl-[protein] + CoA. Functionally, the pyruvate dehydrogenase complex catalyzes the overall conversion of pyruvate to acetyl-CoA and CO(2). It contains multiple copies of three enzymatic components: pyruvate dehydrogenase (E1), dihydrolipoamide acetyltransferase (E2) and lipoamide dehydrogenase (E3). This Rickettsia bellii (strain RML369-C) protein is Dihydrolipoyllysine-residue acetyltransferase component of pyruvate dehydrogenase complex (pdhC).